A 352-amino-acid polypeptide reads, in one-letter code: UDP-N-acetylglucosamine--N-acetylmuramyl-(pentapeptide) pyrophosphoryl-undecaprenol N-acetylglucosamine transferase 2 (352 aa).

UDP-N-acetyl-alpha-D-glucosamine-binding positions include 11 to 13 (SAG), arginine 164, serine 194, and glutamine 289.

It belongs to the glycosyltransferase 28 family. MurG subfamily.

The protein localises to the cell membrane. It carries out the reaction di-trans,octa-cis-undecaprenyl diphospho-N-acetyl-alpha-D-muramoyl-L-alanyl-D-glutamyl-meso-2,6-diaminopimeloyl-D-alanyl-D-alanine + UDP-N-acetyl-alpha-D-glucosamine = di-trans,octa-cis-undecaprenyl diphospho-[N-acetyl-alpha-D-glucosaminyl-(1-&gt;4)]-N-acetyl-alpha-D-muramoyl-L-alanyl-D-glutamyl-meso-2,6-diaminopimeloyl-D-alanyl-D-alanine + UDP + H(+). The protein operates within cell wall biogenesis; peptidoglycan biosynthesis. Functionally, cell wall formation. Catalyzes the transfer of a GlcNAc subunit on undecaprenyl-pyrophosphoryl-MurNAc-pentapeptide (lipid intermediate I) to form undecaprenyl-pyrophosphoryl-MurNAc-(pentapeptide)GlcNAc (lipid intermediate II). The polypeptide is UDP-N-acetylglucosamine--N-acetylmuramyl-(pentapeptide) pyrophosphoryl-undecaprenol N-acetylglucosamine transferase 2 (Bacillus anthracis).